Here is a 73-residue protein sequence, read N- to C-terminus: Arabinogalactan protein 16 (73 aa).

The first 26 residues, 1 to 26 (MASRNSVTGFALFSFVFAVILSLAGA), serve as a signal peptide directing secretion. Glutamine 27 carries the pyrrolidone carboxylic acid modification. 4-hydroxyproline occurs at positions 31, 33, and 35. 3 O-linked (Ara...) hydroxyproline glycosylation sites follow: proline 31, proline 33, and proline 35. The GPI-anchor amidated serine moiety is linked to residue serine 37. A propeptide spans 38–73 (DGTSIDQGIAYLLMVVALVLTYLIHPLDASSSYSFF) (removed in mature form).

The protein belongs to the AG-peptide AGP family. Post-translationally, contains 4-hydroxyproline; hydroxylated on Pro-31, Pro-33 and Pro-35. O-glycosylated on hydroxyprolines; noncontiguous hydroxylproline residues are glycosylated with arabinogalactan. Predominantly expressed in flowers.

It is found in the cell membrane. Its function is as follows. Proteoglycan that seems to be implicated in diverse developmental roles such as differentiation, cell-cell recognition, embryogenesis and programmed cell death. The chain is Arabinogalactan protein 16 from Arabidopsis thaliana (Mouse-ear cress).